The sequence spans 317 residues: L-lactate dehydrogenase (317 aa).

Residues V17, D38, K43, Y68, and 82 to 83 contribute to the NAD(+) site; that span reads GV. R91 provides a ligand contact to substrate. NAD(+)-binding positions include S104, 121–123, and S146; that span reads VSN. Substrate is bound at residue 123-126; the sequence is NPVD. Residue 151–154 participates in substrate binding; that stretch reads DTSR. Positions 156 and 171 each coordinate beta-D-fructose 1,6-bisphosphate. The active-site Proton acceptor is H178. A Phosphotyrosine modification is found at Y224. T233 contacts substrate.

This sequence belongs to the LDH/MDH superfamily. LDH family. Homotetramer.

It localises to the cytoplasm. It catalyses the reaction (S)-lactate + NAD(+) = pyruvate + NADH + H(+). The protein operates within fermentation; pyruvate fermentation to lactate; (S)-lactate from pyruvate: step 1/1. Allosterically activated by fructose 1,6-bisphosphate (FBP). Its function is as follows. Catalyzes the conversion of lactate to pyruvate. The protein is L-lactate dehydrogenase of Clostridium perfringens (strain ATCC 13124 / DSM 756 / JCM 1290 / NCIMB 6125 / NCTC 8237 / Type A).